A 147-amino-acid polypeptide reads, in one-letter code: MDRSVVTQKIIEAKVRNGMKWSDIAKAIGESKEWVTAGCLGQMTFTKVQAEAAGKLFDLTDEEMAWLQIVPYKGSLPTAVPTDPLIYRWYEIVSVYGTTIKELIHEEFGDGIMSAIDFSMDIQREPDPKGDRVQVVLSGKYLSYKTY.

Active-site residues include arginine 88, glutamate 91, and serine 114.

This sequence belongs to the cyanase family.

The catalysed reaction is cyanate + hydrogencarbonate + 3 H(+) = NH4(+) + 2 CO2. Functionally, catalyzes the reaction of cyanate with bicarbonate to produce ammonia and carbon dioxide. This Polynucleobacter asymbioticus (strain DSM 18221 / CIP 109841 / QLW-P1DMWA-1) (Polynucleobacter necessarius subsp. asymbioticus) protein is Cyanate hydratase.